We begin with the raw amino-acid sequence, 631 residues long: Probable basic-leucine zipper transcription factor F (631 aa).

Positions 35–62 (KKNANVFNNFQQQQQQIQQQNKQSNGLI) form a coiled coil. Disordered stretches follow at residues 46–117 (QQQQ…HNNI), 154–207 (LNNS…NNQF), and 264–406 (MLNV…ERHQ). 2 stretches are compositionally biased toward low complexity: residues 155–206 (NNSY…NNNQ) and 271–360 (NNAN…GSNN). Residues 328-366 (NNNNNNSNNISTQINNLNNNINNQNNQLNGSNNGKKKEE) adopt a coiled-coil conformation. Positions 405–468 (HQKRQRRLVK…KLIREQLLYL (64 aa)) constitute a bZIP domain. The tract at residues 407–427 (KRQRRLVKNREAAQLFRQRQK) is basic motif. Positions 433-440 (LEKKVSDL) are leucine-zipper. The disordered stretch occupies residues 546–631 (QGNLLGTPIP…PPQQSTPNQR (86 aa)). Low complexity-rich tracts occupy residues 563–609 (SNSG…PNSS) and 618–631 (PQNT…PNQR).

The protein belongs to the bZIP family.

It is found in the nucleus. Its function is as follows. Probable transcriptional regulator. This chain is Probable basic-leucine zipper transcription factor F (bzpF), found in Dictyostelium discoideum (Social amoeba).